Reading from the N-terminus, the 131-residue chain is Aspartate 1-decarboxylase (131 aa).

S25 functions as the Schiff-base intermediate with substrate; via pyruvic acid in the catalytic mechanism. At S25 the chain carries Pyruvic acid (Ser). T57 contacts substrate. Residue Y58 is the Proton donor of the active site. 73–75 (GAA) serves as a coordination point for substrate. Positions 112–131 (NVPTTQKSENPGQGSLRNAI) are disordered. A compositionally biased stretch (polar residues) spans 113 to 131 (VPTTQKSENPGQGSLRNAI).

It belongs to the PanD family. Heterooctamer of four alpha and four beta subunits. Pyruvate serves as cofactor. In terms of processing, is synthesized initially as an inactive proenzyme, which is activated by self-cleavage at a specific serine bond to produce a beta-subunit with a hydroxyl group at its C-terminus and an alpha-subunit with a pyruvoyl group at its N-terminus.

The protein localises to the cytoplasm. It carries out the reaction L-aspartate + H(+) = beta-alanine + CO2. The protein operates within cofactor biosynthesis; (R)-pantothenate biosynthesis; beta-alanine from L-aspartate: step 1/1. Catalyzes the pyruvoyl-dependent decarboxylation of aspartate to produce beta-alanine. The sequence is that of Aspartate 1-decarboxylase from Syntrophotalea carbinolica (strain DSM 2380 / NBRC 103641 / GraBd1) (Pelobacter carbinolicus).